Reading from the N-terminus, the 571-residue chain is Potassium-transporting ATPase potassium-binding subunit (571 aa).

The next 11 helical transmembrane spans lie at 5–25, 64–84, 136–156, 179–199, 254–274, 285–305, 330–350, 357–376, 421–441, 488–508, and 527–547; these read GWIQ…PLGS, LAYT…LYAI, GLTH…VALI, LYVL…QGIP, LSNL…TNVF, WAIL…TYWA, FGIA…CGAV, FTAL…EIII, MLGI…ATVV, LAIG…AIAG, and GGLF…LTFF.

The protein belongs to the KdpA family. As to quaternary structure, the system is composed of three essential subunits: KdpA, KdpB and KdpC.

It is found in the cell inner membrane. Its function is as follows. Part of the high-affinity ATP-driven potassium transport (or Kdp) system, which catalyzes the hydrolysis of ATP coupled with the electrogenic transport of potassium into the cytoplasm. This subunit binds the periplasmic potassium ions and delivers the ions to the membrane domain of KdpB through an intramembrane tunnel. This chain is Potassium-transporting ATPase potassium-binding subunit, found in Methylobacterium radiotolerans (strain ATCC 27329 / DSM 1819 / JCM 2831 / NBRC 15690 / NCIMB 10815 / 0-1).